Here is a 200-residue protein sequence, read N- to C-terminus: Snake venom serine protease VaSP1 (200 aa).

The 200-residue stretch at 1-200 folds into the Peptidase S1 domain; it reads VIGGDECNIN…EIQGIVSYGK (200 aa). Catalysis depends on charge relay system residues D88 and S182.

As to quaternary structure, monomer. Post-translationally, N-glycosylated. The protein exist in multiple isoforms. In terms of tissue distribution, expressed by the venom gland.

Its subcellular location is the secreted. With respect to regulation, inhibited by Pefabloc (90% inhibition), DTT (90%), Zn(2+) (80%), trypsin inhibitor II (50%), and benzamidine (45%), but not inhibited by EDTA, Ca(2+), Mg(2+) and L-Cys. Its function is as follows. Snake venom serine protease active on several blood coagulation enzymes. It completely cleaves fibrinogen Aalpha chain (FGA) after 120 minutes, partially cleaves Bbeta chain (FGB) (overnight) and has no activity on gamma chain. It does not release fibrinopeptides A and/or B exclusively, since the enzyme does not provoke fibrin polymerisation. It also degrades fibrin as efficiently as plasmin, and exhibits potent ability to cleave plasminogen and prothrombin, as well as heavy chain of factor X (F10). In vitro, it cleaves insulin B-chain (at positions His38-Leu39, Ala40-Leu41 and Tyr16-Leu17). The polypeptide is Snake venom serine protease VaSP1 (Vipera ammodytes ammodytes (Western sand viper)).